Consider the following 307-residue polypeptide: MVTATHPHSLGRLSRMRHLARQYAALTKPRVTQLAVFCAIIGMFLATPGMVPWPVLIGGAAGIWLLAGAAFAINCLVEQKIDALMRRTAWRPSATGEITTRQTLVFSAILGGAGMWLLHVYANDLTMWLTFATFLGYAVVYTILLKPATPQNIVIGGLSGAMPPALGWAAVAGEVPAEAWFLVLIIFTWTPPHFWALALYRRADYAKSGLPMLPVTHGERYTLLHILLYTLIMIAATLLPFVYGMSGYIYLAAALALGAGFLAYAWKLYRNYSDELAQRTFRFSILYLSLLFAALLVDHYFKFVPQV.

9 helical membrane passes run Val31–Val51, Trp53–Ile73, Thr103–Asn123, Leu125–Leu145, Ile153–Gly173, Ala179–Leu199, Leu223–Tyr243, Ser246–Trp266, and Ile285–Pro305.

The protein belongs to the UbiA prenyltransferase family. Protoheme IX farnesyltransferase subfamily.

It is found in the cell inner membrane. The catalysed reaction is heme b + (2E,6E)-farnesyl diphosphate + H2O = Fe(II)-heme o + diphosphate. It functions in the pathway porphyrin-containing compound metabolism; heme O biosynthesis; heme O from protoheme: step 1/1. In terms of biological role, converts heme B (protoheme IX) to heme O by substitution of the vinyl group on carbon 2 of heme B porphyrin ring with a hydroxyethyl farnesyl side group. The protein is Protoheme IX farnesyltransferase of Cupriavidus taiwanensis (strain DSM 17343 / BCRC 17206 / CCUG 44338 / CIP 107171 / LMG 19424 / R1) (Ralstonia taiwanensis (strain LMG 19424)).